The following is a 100-amino-acid chain: Small ribosomal subunit protein uS14c (100 aa).

It belongs to the universal ribosomal protein uS14 family. In terms of assembly, part of the 30S ribosomal subunit.

Its subcellular location is the plastid. The protein localises to the chloroplast. Its function is as follows. Binds 16S rRNA, required for the assembly of 30S particles. This chain is Small ribosomal subunit protein uS14c, found in Eucalyptus globulus subsp. globulus (Tasmanian blue gum).